We begin with the raw amino-acid sequence, 367 residues long: MRWLLPWTLAAVAVLRVGNILATALSPTPTTMTFTPAPLEETTTRPEFCKWPCECPQSPPRCPLGVSLITDGCECCKICAQQLGDNCTEAAICDPHRGLYCDYSGDRPRYAIGVCAQVVGVGCVLDGVRYTNGESFQPNCRYNCTCIDGTVGCTPLCLSPRPPRLWCRQPRHVRVPGQCCEQWVCDDDARRPRQTALLDTRAFAASGAVEQRYENCIAYTSPWSPCSTTCGLGISTRISNVNARCWPEQESRLCNLRPCDVDIQLHIKAGKKCLAVYQPEEATNFTLAGCVSTRTYRPKYCGVCTDNRCCIPYKSKTISVDFQCPEGPGFSRQVLWINACFCNLSCRNPNDIFADLESYPDFEEIAN.

An N-terminal signal peptide occupies residues 1–22; the sequence is MRWLLPWTLAAVAVLRVGNILA. The 74-residue stretch at 45 to 118 folds into the IGFBP N-terminal domain; it reads RPEFCKWPCE…RYAIGVCAQV (74 aa). Intrachain disulfides connect Cys-49/Cys-73, Cys-53/Cys-75, Cys-55/Cys-76, and Cys-62/Cys-79. An N-linked (GlcNAc...) asparagine glycan is attached at Asn-86. 2 disulfides stabilise this stretch: Cys-87/Cys-101 and Cys-93/Cys-115. A VWFC domain is found at 121–186; the sequence is VGCVLDGVRY…GQCCEQWVCD (66 aa). N-linked (GlcNAc...) asparagine glycosylation occurs at Asn-143. The TSP type-1 domain maps to 215–260; that stretch reads NCIAYTSPWSPCSTTCGLGISTRISNVNARCWPEQESRLCNLRPCD. Disulfide bonds link Cys-273-Cys-310, Cys-290-Cys-324, Cys-301-Cys-340, Cys-304-Cys-342, and Cys-309-Cys-346. One can recognise a CTCK domain in the interval 273–347; that stretch reads CLAVYQPEEA…NACFCNLSCR (75 aa). An N-linked (GlcNAc...) asparagine glycan is attached at Asn-284. Asn-343 is a glycosylation site (N-linked (GlcNAc...) asparagine).

The protein belongs to the CCN family. Highly expressed in kidney and lung. Lower levels in heart, brain, spleen, liver, skeletal muscle and testis. Expressed in low metastatic melanoma cells.

The protein localises to the secreted. In terms of biological role, downstream regulator in the Wnt/Frizzled-signaling pathway. Associated with cell survival. Adheres to skin and melanoma fibroblasts. In vitro binding to skin fibroblasts occurs through the proteoglycans, decorin and biglycan. Suppresses tumor growth in vivo. The chain is CCN family member 4 (Ccn4) from Mus musculus (Mouse).